We begin with the raw amino-acid sequence, 335 residues long: Histidinol-phosphate aminotransferase (335 aa).

Position 202 is an N6-(pyridoxal phosphate)lysine (K202).

This sequence belongs to the class-II pyridoxal-phosphate-dependent aminotransferase family. Histidinol-phosphate aminotransferase subfamily. As to quaternary structure, homodimer. Requires pyridoxal 5'-phosphate as cofactor.

The catalysed reaction is L-histidinol phosphate + 2-oxoglutarate = 3-(imidazol-4-yl)-2-oxopropyl phosphate + L-glutamate. It participates in amino-acid biosynthesis; L-histidine biosynthesis; L-histidine from 5-phospho-alpha-D-ribose 1-diphosphate: step 7/9. This is Histidinol-phosphate aminotransferase from Thermotoga sp. (strain RQ2).